The sequence spans 215 residues: Cytochrome b6 (215 aa).

Residues I32 to F52 form a helical membrane-spanning segment. C35 is a binding site for heme c. Heme b contacts are provided by H86 and H100. 3 consecutive transmembrane segments (helical) span residues A90–F110, L116–Y136, and L186–I206. 2 residues coordinate heme b: H187 and H202.

This sequence belongs to the cytochrome b family. PetB subfamily. The 4 large subunits of the cytochrome b6-f complex are cytochrome b6, subunit IV (17 kDa polypeptide, PetD), cytochrome f and the Rieske protein, while the 4 small subunits are PetG, PetL, PetM and PetN. The complex functions as a dimer. Requires heme b as cofactor. Heme c is required as a cofactor.

The protein resides in the plastid. It is found in the chloroplast thylakoid membrane. Component of the cytochrome b6-f complex, which mediates electron transfer between photosystem II (PSII) and photosystem I (PSI), cyclic electron flow around PSI, and state transitions. The chain is Cytochrome b6 from Pelargonium hortorum (Common geranium).